The following is a 218-amino-acid chain: Dehydration-responsive element-binding protein 1B (218 aa).

A disordered region spans residues 1-26 (MEVEEAAYRTVWSEPPKRPAGRTKFR). The AP2/ERF DNA-binding region spans 32–95 (VYRGVRRRGG…RGRAACLNFA (64 aa)). The interval 131–151 (SAAPSSPAETFANDGDEEEDN) is disordered.

The protein belongs to the AP2/ERF transcription factor family. ERF subfamily.

Its subcellular location is the nucleus. Transcriptional activator that binds specifically to the DNA sequence 5'-[AG]CCGAC-3'. Binding to the C-repeat/DRE element mediates high salinity- and dehydration-inducible transcription. Confers resistance to high salt, cold and drought stress. The chain is Dehydration-responsive element-binding protein 1B (DREB1B) from Oryza sativa subsp. japonica (Rice).